We begin with the raw amino-acid sequence, 619 residues long: DNA mismatch repair protein MutL (619 aa).

Residues 339-400 are disordered; it reads AEKDDPPAPR…GGASWPHAQP (62 aa).

This sequence belongs to the DNA mismatch repair MutL/HexB family.

Its function is as follows. This protein is involved in the repair of mismatches in DNA. It is required for dam-dependent methyl-directed DNA mismatch repair. May act as a 'molecular matchmaker', a protein that promotes the formation of a stable complex between two or more DNA-binding proteins in an ATP-dependent manner without itself being part of a final effector complex. The polypeptide is DNA mismatch repair protein MutL (Klebsiella pneumoniae subsp. pneumoniae (strain ATCC 700721 / MGH 78578)).